Consider the following 410-residue polypeptide: DNA replication and repair protein RecF (410 aa).

Residue 30-37 (GPNGHGKT) participates in ATP binding.

This sequence belongs to the RecF family.

The protein localises to the cytoplasm. In terms of biological role, the RecF protein is involved in DNA metabolism; it is required for DNA replication and normal SOS inducibility. RecF binds preferentially to single-stranded, linear DNA. It also seems to bind ATP. This is DNA replication and repair protein RecF from Rhodococcus jostii (strain RHA1).